The chain runs to 507 residues: Phosphoprotein (507 aa).

Residues Met-1–Ala-48 are interaction with N0. Disordered stretches follow at residues Ser-40 to Thr-92, Ser-133 to Arg-168, Asn-201 to Ile-228, and Thr-252 to Pro-273. Ser-86 carries the phosphoserine modification. The segment covering Ser-133–Gly-143 has biased composition (low complexity). Positions Gly-144–Thr-160 are enriched in acidic residues. Residue Ser-151 is modified to Phosphoserine. Positions Ser-260–Gly-270 are enriched in low complexity. Residues Gly-304–Gly-376 form a multimerization region. Interaction with the L polymerase stretches follow at residues Ser-361–Leu-377 and Pro-396–Leu-410. Residues Gly-457–Lys-507 form a x domain (XD) region. The tract at residues Ala-459 to Lys-507 is interaction with the nucleocapsid (N-RNA).

This sequence belongs to the morbillivirus P protein family. As to quaternary structure, homotetramer. Interacts (via multimerization domain and XD domain) with polymerase L; this interaction forms the polymerase L-P complex. Interacts (via N-terminus) with N0 (via Ncore); this interaction allows P to chaperon N0 to avoid N polymerization and non-specific RNA binding before encapsidation. Interacts (via C-terminus) with N-RNA template (via Ntail); this interaction maintains the P/L complex anchored to the nucleocapsid template during the sequential transcription. Interacts (via C-terminus) with protein C this interaction allows C to associate with the ribonucleocapsid. In terms of processing, phosphorylation on serines by host CK2 is necessary for the formation of viral factories.

In terms of biological role, essential cofactor of the RNA polymerase L that plays a central role in the transcription and replication by forming the polymerase complex with RNA polymerase L and recruiting L to the genomic N-RNA template for RNA synthesis. Also plays a central role in the encapsidation of nascent RNA chains by forming the encapsidation complex with the nucleocapsid protein N (N-P complex). Acts as a chaperone for newly synthesized free N protein, so-called N0, allowing encapsidation of nascent RNA chains during replication. The nucleoprotein protein N prevents excessive phosphorylation of P, which leads to down-regulation of viral transcription/ replication. Participates, together with N, in the formation of viral factories (viroplasms), which are large inclusions in the host cytoplasm where replication takes place. This is Phosphoprotein (P/V) from Homo sapiens (Human).